Here is a 72-residue protein sequence, read N- to C-terminus: Translation initiation factor IF-1 (72 aa).

Residues 1 to 72 (MAKDDVIEIQ…TKGRITYRFK (72 aa)) enclose the S1-like domain.

Belongs to the IF-1 family. In terms of assembly, component of the 30S ribosomal translation pre-initiation complex which assembles on the 30S ribosome in the order IF-2 and IF-3, IF-1 and N-formylmethionyl-tRNA(fMet); mRNA recruitment can occur at any time during PIC assembly.

It localises to the cytoplasm. In terms of biological role, one of the essential components for the initiation of protein synthesis. Stabilizes the binding of IF-2 and IF-3 on the 30S subunit to which N-formylmethionyl-tRNA(fMet) subsequently binds. Helps modulate mRNA selection, yielding the 30S pre-initiation complex (PIC). Upon addition of the 50S ribosomal subunit IF-1, IF-2 and IF-3 are released leaving the mature 70S translation initiation complex. This Lacticaseibacillus paracasei (strain ATCC 334 / BCRC 17002 / CCUG 31169 / CIP 107868 / KCTC 3260 / NRRL B-441) (Lactobacillus paracasei) protein is Translation initiation factor IF-1.